We begin with the raw amino-acid sequence, 679 residues long: Sodium-dependent phosphate transporter 1 (679 aa).

Helical transmembrane passes span 21-41 (YLWM…SVGA), 62-82 (ACIL…AKVS), 100-120 (GLLM…QLVA), 158-178 (IVMS…ILFF), 203-223 (ACTV…LLGF), and 230-250 (GTIL…WFFV). Phosphoserine is present on residues Ser265 and Ser269. Helical transmembrane passes span 511 to 531 (VSLL…FAHG), 558 to 578 (VATP…GLWV), 600 to 620 (FSIE…GLPI), and 650 to 670 (IFMA…AIMA). An a region spans residues 550 to 558 (DTGDVSSKV).

The protein belongs to the inorganic phosphate transporter (PiT) (TC 2.A.20) family. Ubiquitously expressed.

It localises to the cell membrane. It catalyses the reaction 2 Na(+)(out) + phosphate(out) = 2 Na(+)(in) + phosphate(in). Sodium-phosphate symporter which preferentially transports the monovalent form of phosphate with a stoichiometry of two sodium ions per phosphate ion. May play a role in extracellular matrix and cartilage calcification as well as in vascular calcification. Essential for cell proliferation but this function is independent of its phosphate transporter activity. Its function is as follows. (Microbial infection) May function as a retroviral receptor as it confers human cells susceptibility to infection to Gibbon Ape Leukemia Virus (GaLV), Simian sarcoma-associated virus (SSAV) and Feline leukemia virus subgroup B (FeLV-B) as well as 10A1 murine leukemia virus (10A1 MLV). This is Sodium-dependent phosphate transporter 1 (SLC20A1) from Homo sapiens (Human).